Consider the following 1071-residue polypeptide: DNA-directed RNA polymerase subunit beta (1071 aa).

The protein belongs to the RNA polymerase beta chain family. As to quaternary structure, in plastids the minimal PEP RNA polymerase catalytic core is composed of four subunits: alpha, beta, beta', and beta''. When a (nuclear-encoded) sigma factor is associated with the core the holoenzyme is formed, which can initiate transcription.

Its subcellular location is the plastid. It localises to the chloroplast. The enzyme catalyses RNA(n) + a ribonucleoside 5'-triphosphate = RNA(n+1) + diphosphate. DNA-dependent RNA polymerase catalyzes the transcription of DNA into RNA using the four ribonucleoside triphosphates as substrates. This is DNA-directed RNA polymerase subunit beta from Acorus gramineus (Dwarf sweet flag).